A 401-amino-acid polypeptide reads, in one-letter code: SVP1-like protein 2 (401 aa).

WD repeat units lie at residues 222–262 and 267–306; these read AHKN…LIHE and LDRA…DKRH.

The protein belongs to the WD repeat PROPPIN family.

The protein localises to the vacuole membrane. It localises to the cytoplasmic vesicle membrane. Its function is as follows. Involved in mitochondrial or peroxisomal functions and amino acid signaling pathways. In Eremothecium gossypii (strain ATCC 10895 / CBS 109.51 / FGSC 9923 / NRRL Y-1056) (Yeast), this protein is SVP1-like protein 2 (HSV2).